A 361-amino-acid polypeptide reads, in one-letter code: Inactive 2'-5'-oligoadenylate synthase 1D (361 aa).

It belongs to the 2-5A synthase family. As to quaternary structure, interacts with OAS1A, the interaction inhibits OAS1A catalytic activity. Expressed specifically in oocytes (at protein level). Expressed at highest level in ovary with lesser amounts in intestine, brain, thymus lung, kidney, liver and uterus.

Its subcellular location is the cytoplasm. In terms of biological role, does not have 2'-5'-oligoadenylate synthetase activity, but can bind double-stranded RNA. May play a role in the control of female fertility, possibly by binding to and inhibiting OAS1A. The protein is Inactive 2'-5'-oligoadenylate synthase 1D of Mus musculus (Mouse).